Reading from the N-terminus, the 120-residue chain is uncharacterized protein (120 aa).

This is an uncharacterized protein from Bacillus subtilis (strain 168).